A 426-amino-acid polypeptide reads, in one-letter code: MSKTNESLLKRRQAAVPRGVGQIHPVVAERAENSTVWDVEGREYIDFAGGIAVLNTGHLHPKVIAAVQEQLGKLSHTCFQVLAYEPYIELAEEIAKRVPGDFPKKTLLVTSGSEAVENAVKIARAATGRAGVIAFTGAYHGRTMMTLGLTGKVVPYSAGMGLMPGGIFRALAPCELHGVSEDDSIASIERIFKNDAQPQDIAAIIIEPVQGEGGFYVNSKSFMQRLRALCDQHGILLIADEVQTGAGRTGTFFATEQLGIVPDLTTFAKSVGGGFPISGVAGKAEIMDAIAPGGLGGTYAGSPIACAAALAVLKVFEEEKLLERSQAVGERLKAGLREIQAKHKVIGDVRGLGSMVAIELFEGGDTHKPAAELVSKIVVRAREKGLILLSCGTYYNVIRFLMPVTIPDAQLEKGLAILAECFDELA.

Pyridoxal 5'-phosphate-binding positions include 112–113 (GS), tyrosine 139, and 240–243 (DEVQ). An N6-(pyridoxal phosphate)lysine modification is found at lysine 269. Threonine 298 is a pyridoxal 5'-phosphate binding site.

Belongs to the class-III pyridoxal-phosphate-dependent aminotransferase family. Pyridoxal 5'-phosphate is required as a cofactor.

It catalyses the reaction 5-aminopentanoate + 2-oxoglutarate = 5-oxopentanoate + L-glutamate. Functionally, catalyzes the conversion of 5-aminovalerate to 5-oxopentanoate. The protein is 5-aminovalerate aminotransferase DavT (davT) of Pseudomonas aeruginosa (strain ATCC 15692 / DSM 22644 / CIP 104116 / JCM 14847 / LMG 12228 / 1C / PRS 101 / PAO1).